Reading from the N-terminus, the 284-residue chain is Aliphatic sulfonates import ATP-binding protein SsuB (284 aa).

In terms of domain architecture, ABC transporter spans Leu21–Leu242. Gly53–Ser60 provides a ligand contact to ATP.

The protein belongs to the ABC transporter superfamily. Aliphatic sulfonates importer (TC 3.A.1.17.2) family. In terms of assembly, the complex is composed of two ATP-binding proteins (SsuB), two transmembrane proteins (SsuC) and a solute-binding protein (SsuA).

It is found in the cell inner membrane. The enzyme catalyses ATP + H2O + aliphatic sulfonate-[sulfonate-binding protein]Side 1 = ADP + phosphate + aliphatic sulfonateSide 2 + [sulfonate-binding protein]Side 1.. Functionally, part of the ABC transporter complex SsuABC involved in aliphatic sulfonates import. Responsible for energy coupling to the transport system. The polypeptide is Aliphatic sulfonates import ATP-binding protein SsuB (Ralstonia nicotianae (strain ATCC BAA-1114 / GMI1000) (Ralstonia solanacearum)).